Reading from the N-terminus, the 373-residue chain is Inhibitor of nuclear factor kappa-B kinase-interacting protein (373 aa).

A compositionally biased stretch (basic residues) spans 1 to 11 (MSEVKSRKKPG). The tract at residues 1–38 (MSEVKSRKKPGPKVAAPEPEKRSDGRKNPEARGDAGWA) is disordered. Positions 18-33 (EPEKRSDGRKNPEARG) are enriched in basic and acidic residues. A helical membrane pass occupies residues 43-59 (GLSLLSLAMTLGLAWLV). Coiled-coil stretches lie at residues 86 to 257 (LQSK…NKLS) and 285 to 324 (QDLI…TLEG). Asn-151 is a glycosylation site (N-linked (GlcNAc...) asparagine).

Post-translationally, N-glycosylated at Asn-151.

It localises to the endoplasmic reticulum membrane. In terms of biological role, target of p53/TP53 with pro-apoptotic function. This is Inhibitor of nuclear factor kappa-B kinase-interacting protein (Ikbip) from Mus musculus (Mouse).